The chain runs to 470 residues: Fumarate reductase 1 (470 aa).

6 to 20 (VVVIGTGLAGLAAAN) lines the FAD pocket. Serine 66 carries the post-translational modification Phosphoserine. Catalysis depends on residues histidine 249 and arginine 272.

This sequence belongs to the FAD-dependent oxidoreductase 2 family. FRD/SDH subfamily. FAD serves as cofactor. In terms of processing, the N-terminus is blocked.

The protein localises to the cytoplasm. It catalyses the reaction succinate + NAD(+) = fumarate + NADH + H(+). Functionally, irreversibly catalyzes the reduction of fumarate to succinate. Together with the second isozyme of soluble fumarate reductase (OSM1), essential for anaerobic growth. Involved in maintaining redox balance. Reduction of fumarate is the main source of succinate during fermentation, and under anaerobic conditions, the formation of succinate is strictly required for the reoxidation of FADH(2). This chain is Fumarate reductase 1 (FRD1), found in Saccharomyces cerevisiae (strain ATCC 204508 / S288c) (Baker's yeast).